Reading from the N-terminus, the 150-residue chain is Deoxyuridine 5'-triphosphate nucleotidohydrolase (150 aa).

Residues 69–71 (RSG), Asn-82, 86–88 (LID), and Met-96 each bind substrate.

The protein belongs to the dUTPase family. Mg(2+) serves as cofactor.

The catalysed reaction is dUTP + H2O = dUMP + diphosphate + H(+). Its pathway is pyrimidine metabolism; dUMP biosynthesis; dUMP from dCTP (dUTP route): step 2/2. This enzyme is involved in nucleotide metabolism: it produces dUMP, the immediate precursor of thymidine nucleotides and it decreases the intracellular concentration of dUTP so that uracil cannot be incorporated into DNA. The sequence is that of Deoxyuridine 5'-triphosphate nucleotidohydrolase from Leptothrix cholodnii (strain ATCC 51168 / LMG 8142 / SP-6) (Leptothrix discophora (strain SP-6)).